A 211-amino-acid chain; its full sequence is ATP-dependent dethiobiotin synthetase BioD (211 aa).

Position 10-15 (10-15 (GIGKTY)) interacts with ATP. A Mg(2+)-binding site is contributed by threonine 14. Residue lysine 35 is part of the active site. Serine 39 provides a ligand contact to substrate. ATP contacts are provided by residues aspartate 44, 105–108 (EGAG), and 165–166 (NC). Mg(2+)-binding residues include aspartate 44 and glutamate 105.

Belongs to the dethiobiotin synthetase family. As to quaternary structure, homodimer. Mg(2+) serves as cofactor.

The protein localises to the cytoplasm. It carries out the reaction (7R,8S)-7,8-diammoniononanoate + CO2 + ATP = (4R,5S)-dethiobiotin + ADP + phosphate + 3 H(+). It functions in the pathway cofactor biosynthesis; biotin biosynthesis; biotin from 7,8-diaminononanoate: step 1/2. Catalyzes a mechanistically unusual reaction, the ATP-dependent insertion of CO2 between the N7 and N8 nitrogen atoms of 7,8-diaminopelargonic acid (DAPA, also called 7,8-diammoniononanoate) to form a ureido ring. This Methanococcus vannielii (strain ATCC 35089 / DSM 1224 / JCM 13029 / OCM 148 / SB) protein is ATP-dependent dethiobiotin synthetase BioD.